A 306-amino-acid chain; its full sequence is N(1)-aminopropylagmatine ureohydrolase (306 aa).

The Mn(2+) site is built by His121, Asp145, His147, Asp149, Asp228, and Asp230.

It belongs to the arginase family. It depends on Mn(2+) as a cofactor.

It catalyses the reaction N(1)-(3-aminopropyl)agmatine + H2O = urea + spermidine. It participates in amine and polyamine biosynthesis; spermidine biosynthesis. In terms of biological role, ureohydrolase involved in the biosynthesis of spermidine via the carboxyaminopropylagmatine (CAPA) pathway. Catalyzes the conversion of aminopropylagmatine (APA) to spermidine and urea. Is highly specific to APA and incapable of releasing measurable urea from CAPA, agmatine, arginine, guanidine, guanidinobutyrate and guanidinopropionate. The chain is N(1)-aminopropylagmatine ureohydrolase from Synechocystis sp. (strain ATCC 27184 / PCC 6803 / Kazusa).